The sequence spans 69 residues: MYVVTPLLLRGLTGSARRLPVPRAQVHSMPPEQKLGVLELAIGFTSCMVTFLLPAGWIMSHLESYKKRG.

The transit peptide at 1-25 directs the protein to the mitochondrion; sequence MYVVTPLLLRGLTGSARRLPVPRAQ. The SIFI-degron signature appears at 2–19; it reads YVVTPLLLRGLTGSARRL. The Mitochondrial matrix segment spans residues 26–36; it reads VHSMPPEQKLG. The helical transmembrane segment at 37–60 threads the bilayer; sequence VLELAIGFTSCMVTFLLPAGWIMS. Topologically, residues 61–69 are mitochondrial intermembrane; that stretch reads HLESYKKRG.

It belongs to the cytochrome c oxidase VIII family. In terms of assembly, component of the cytochrome c oxidase (complex IV, CIV), a multisubunit enzyme composed of 14 subunits. The complex is composed of a catalytic core of 3 subunits MT-CO1, MT-CO2 and MT-CO3, encoded in the mitochondrial DNA, and 11 supernumerary subunits COX4I, COX5A, COX5B, COX6A, COX6B, COX6C, COX7A, COX7B, COX7C, COX8 and NDUFA4, which are encoded in the nuclear genome. The complex exists as a monomer or a dimer and forms supercomplexes (SCs) in the inner mitochondrial membrane with NADH-ubiquinone oxidoreductase (complex I, CI) and ubiquinol-cytochrome c oxidoreductase (cytochrome b-c1 complex, complex III, CIII), resulting in different assemblies (supercomplex SCI(1)III(2)IV(1) and megacomplex MCI(2)III(2)IV(2)). Post-translationally, in response to mitochondrial stress, the precursor protein is ubiquitinated by the SIFI complex in the cytoplasm before mitochondrial import, leading to its degradation. Within the SIFI complex, UBR4 initiates ubiquitin chain that are further elongated or branched by KCMF1.

Its subcellular location is the mitochondrion inner membrane. Its pathway is energy metabolism; oxidative phosphorylation. Its function is as follows. Component of the cytochrome c oxidase, the last enzyme in the mitochondrial electron transport chain which drives oxidative phosphorylation. The respiratory chain contains 3 multisubunit complexes succinate dehydrogenase (complex II, CII), ubiquinol-cytochrome c oxidoreductase (cytochrome b-c1 complex, complex III, CIII) and cytochrome c oxidase (complex IV, CIV), that cooperate to transfer electrons derived from NADH and succinate to molecular oxygen, creating an electrochemical gradient over the inner membrane that drives transmembrane transport and the ATP synthase. Cytochrome c oxidase is the component of the respiratory chain that catalyzes the reduction of oxygen to water. Electrons originating from reduced cytochrome c in the intermembrane space (IMS) are transferred via the dinuclear copper A center (CU(A)) of subunit 2 and heme A of subunit 1 to the active site in subunit 1, a binuclear center (BNC) formed by heme A3 and copper B (CU(B)). The BNC reduces molecular oxygen to 2 water molecules using 4 electrons from cytochrome c in the IMS and 4 protons from the mitochondrial matrix. The protein is Cytochrome c oxidase subunit 8A, mitochondrial (COX8A) of Ateles belzebuth (White-bellied spider monkey).